The primary structure comprises 133 residues: Small ribosomal subunit protein uS11 (133 aa).

This sequence belongs to the universal ribosomal protein uS11 family. Part of the 30S ribosomal subunit. Interacts with proteins S7 and S18. Binds to IF-3.

In terms of biological role, located on the platform of the 30S subunit, it bridges several disparate RNA helices of the 16S rRNA. Forms part of the Shine-Dalgarno cleft in the 70S ribosome. The protein is Small ribosomal subunit protein uS11 of Methylibium petroleiphilum (strain ATCC BAA-1232 / LMG 22953 / PM1).